Consider the following 124-residue polypeptide: Glycine cleavage system H protein (124 aa).

The Lipoyl-binding domain occupies 24–106 (TYTMGITDHA…YDDGWLVKFK (83 aa)). K65 carries the post-translational modification N6-lipoyllysine.

Belongs to the GcvH family. In terms of assembly, the glycine cleavage system is composed of four proteins: P, T, L and H. The cofactor is (R)-lipoate.

Its function is as follows. The glycine cleavage system catalyzes the degradation of glycine. The H protein shuttles the methylamine group of glycine from the P protein to the T protein. This is Glycine cleavage system H protein from Ruthia magnifica subsp. Calyptogena magnifica.